The chain runs to 83 residues: uncharacterized protein (83 aa).

This is an uncharacterized protein from Archaeoglobus fulgidus (strain ATCC 49558 / DSM 4304 / JCM 9628 / NBRC 100126 / VC-16).